The following is a 379-amino-acid chain: DNA-directed RNA polymerase subunit Rpo1C (379 aa).

It belongs to the RNA polymerase beta' chain family. Part of the RNA polymerase complex.

Its subcellular location is the cytoplasm. It carries out the reaction RNA(n) + a ribonucleoside 5'-triphosphate = RNA(n+1) + diphosphate. Functionally, DNA-dependent RNA polymerase (RNAP) catalyzes the transcription of DNA into RNA using the four ribonucleoside triphosphates as substrates. Forms part of the jaw domain. This is DNA-directed RNA polymerase subunit Rpo1C from Pyrobaculum aerophilum (strain ATCC 51768 / DSM 7523 / JCM 9630 / CIP 104966 / NBRC 100827 / IM2).